A 277-amino-acid polypeptide reads, in one-letter code: Hemin import ATP-binding protein HmuV (277 aa).

In terms of domain architecture, ABC transporter spans 25–260 (IHAQGLNLIL…DIIERVYGWP (236 aa)). An ATP-binding site is contributed by 57–64 (GPNGAGKS).

It belongs to the ABC transporter superfamily. Heme (hemin) importer (TC 3.A.1.14.5) family. As to quaternary structure, the complex is composed of two ATP-binding proteins (HmuV), two transmembrane proteins (HmuU) and a solute-binding protein (HmuT).

The protein resides in the cell inner membrane. In terms of biological role, part of the ABC transporter complex HmuTUV involved in hemin import. Responsible for energy coupling to the transport system. The protein is Hemin import ATP-binding protein HmuV of Photobacterium profundum (strain SS9).